A 398-amino-acid chain; its full sequence is Formate-dependent phosphoribosylglycinamide formyltransferase (398 aa).

Residues 21 to 22 and E81 contribute to the N(1)-(5-phospho-beta-D-ribosyl)glycinamide site; that span reads EL. ATP-binding positions include R113, K154, 194-197, and E202; that span reads EEYV. The ATP-grasp domain maps to 118 to 314; sequence RFAAEKVKVP…EFQVHVRSAL (197 aa). Residues E273 and E285 each contribute to the Mg(2+) site. Residues D292, K362, and 369–370 contribute to the N(1)-(5-phospho-beta-D-ribosyl)glycinamide site; that span reads RR.

It belongs to the PurK/PurT family. In terms of assembly, homodimer.

It catalyses the reaction N(1)-(5-phospho-beta-D-ribosyl)glycinamide + formate + ATP = N(2)-formyl-N(1)-(5-phospho-beta-D-ribosyl)glycinamide + ADP + phosphate + H(+). The protein operates within purine metabolism; IMP biosynthesis via de novo pathway; N(2)-formyl-N(1)-(5-phospho-D-ribosyl)glycinamide from N(1)-(5-phospho-D-ribosyl)glycinamide (formate route): step 1/1. Functionally, involved in the de novo purine biosynthesis. Catalyzes the transfer of formate to 5-phospho-ribosyl-glycinamide (GAR), producing 5-phospho-ribosyl-N-formylglycinamide (FGAR). Formate is provided by PurU via hydrolysis of 10-formyl-tetrahydrofolate. This Sulfolobus acidocaldarius (strain ATCC 33909 / DSM 639 / JCM 8929 / NBRC 15157 / NCIMB 11770) protein is Formate-dependent phosphoribosylglycinamide formyltransferase.